A 121-amino-acid polypeptide reads, in one-letter code: Large ribosomal subunit protein bL19 (121 aa).

It belongs to the bacterial ribosomal protein bL19 family.

In terms of biological role, this protein is located at the 30S-50S ribosomal subunit interface and may play a role in the structure and function of the aminoacyl-tRNA binding site. The chain is Large ribosomal subunit protein bL19 from Neisseria gonorrhoeae (strain ATCC 700825 / FA 1090).